Here is a 370-residue protein sequence, read N- to C-terminus: Cytochrome b (370 aa).

Helical transmembrane passes span 25–45 (FGSM…FLAV), 69–90 (WMMQ…YIHI), 105–125 (WLSG…GYVL), and 170–190 (FFAL…LHIL). Residues histidine 75 and histidine 89 each coordinate heme b. Heme b-binding residues include histidine 174 and histidine 188. Histidine 193 is a binding site for a ubiquinone. A run of 4 helical transmembrane segments spans residues 218–238 (YKDM…VSFF), 280–300 (LGGA…PFTH), 312–332 (FMQL…WTAT), and 339–358 (FTTI…ISNP).

It belongs to the cytochrome b family. The cytochrome bc1 complex contains 3 respiratory subunits (MT-CYB, CYC1 and UQCRFS1), 2 core proteins (UQCRC1 and UQCRC2) and probably 6 low-molecular weight proteins. Heme b is required as a cofactor.

It localises to the mitochondrion inner membrane. Its function is as follows. Component of the ubiquinol-cytochrome c reductase complex (complex III or cytochrome b-c1 complex) that is part of the mitochondrial respiratory chain. The b-c1 complex mediates electron transfer from ubiquinol to cytochrome c. Contributes to the generation of a proton gradient across the mitochondrial membrane that is then used for ATP synthesis. The chain is Cytochrome b (MT-CYB) from Chilabothrus exsul (Abaco Island boa).